The sequence spans 238 residues: Cysteine-rich venom protein pseudechetoxin-like (238 aa).

Positions 1-19 are cleaved as a signal peptide; sequence MIAFIVLLSLAAVLQQSSG. A propeptide spanning residues 20–28 is cleaved from the precursor; the sequence is TVDFASESS. One can recognise an SCP domain in the interval 38 to 164; that stretch reads VDKHNDLRRS…STKYLYVCQY (127 aa). 8 disulfides stabilise this stretch: cysteine 75-cysteine 153, cysteine 92-cysteine 165, cysteine 148-cysteine 162, cysteine 184-cysteine 191, cysteine 187-cysteine 196, cysteine 200-cysteine 233, cysteine 209-cysteine 227, and cysteine 218-cysteine 231. The ShKT domain occupies 200-233; the sequence is CKHNDDLSNCKPLAKKSKCQTEWIKSKCPATCFC.

Belongs to the CRISP family. Expressed by the venom gland.

It is found in the secreted. Its function is as follows. Blocks olfactory (CNGA2) and retinal (CNGA1) CNG channel currents. Does not affect neither depolarization- nor caffeine-induced contraction of smooth muscle. This is Cysteine-rich venom protein pseudechetoxin-like from Oxyuranus microlepidotus (Inland taipan).